A 176-amino-acid chain; its full sequence is Ubiquitin-conjugating enzyme E2-20 kDa (176 aa).

Residues 1–20 (MDSDMQNQNPHTNSKNSSSA) are compositionally biased toward polar residues. The interval 1–25 (MDSDMQNQNPHTNSKNSSSAGMAVD) is disordered. A UBC core domain is found at 28 to 175 (SVTKRLRSEL…LMQRYKEIDE (148 aa)). The active-site Glycyl thioester intermediate is the Cys113.

This sequence belongs to the ubiquitin-conjugating enzyme family.

It catalyses the reaction S-ubiquitinyl-[E1 ubiquitin-activating enzyme]-L-cysteine + [E2 ubiquitin-conjugating enzyme]-L-cysteine = [E1 ubiquitin-activating enzyme]-L-cysteine + S-ubiquitinyl-[E2 ubiquitin-conjugating enzyme]-L-cysteine.. It participates in protein modification; protein ubiquitination. Catalyzes the covalent attachment of ubiquitin to other proteins. The chain is Ubiquitin-conjugating enzyme E2-20 kDa (ubc11) from Schizosaccharomyces pombe (strain 972 / ATCC 24843) (Fission yeast).